We begin with the raw amino-acid sequence, 311 residues long: Long form salivary protein D7L1 (311 aa).

An N-terminal signal peptide occupies residues 1 to 16; that stretch reads MKALIFLGAIIAGVLS. 2 disulfides stabilise this stretch: C34–C67 and C63–C120. 4 residues coordinate ADP: S146, R149, Y153, and K160. Cystine bridges form between C170–C202, C183–C311, and C244–C258. The ADP site is built by N281, Y282, and S283.

Belongs to the PBP/GOBP family. As to expression, distal lateral and medial lobes of female mosquito salivary gland (at protein level). Expressed in the head and thorax of the female mosquitoes, where the salivary glands are located. Expressed in salivary gland. Not detected in the female mosquito abdomen. Not detected in the male mosquito tissues.

It is found in the secreted. In terms of biological role, modulates blood feeding of female mosquitoes on vertebrate species by binding and sequestering different mediators involved in the host response. Binds adenine, adenosine, AMP, ADP and ATP, with the highest affinity to ATP and ADP. Inhibits agonist-induced platelet aggregation and hemostasis. The polypeptide is Long form salivary protein D7L1 (Culex quinquefasciatus (Southern house mosquito)).